The chain runs to 86 residues: Cerebrin prohormone (86 aa).

An N-terminal signal peptide occupies residues 1–27 (MFGYRSLLVLLVTLSLCLLLQSSHCSA). Positions 28 to 64 (VRTYGNDLDARARREIISLAARLIKLSMYGPEDDSFV) are excised as a propeptide. Ile-83 carries the post-translational modification Isoleucine amide.

Expressed only in cerebral ganglion.

Its subcellular location is the secreted. May function as a hormone and may play a neuromodulatory role. In Aplysia californica (California sea hare), this protein is Cerebrin prohormone (CBPH).